Consider the following 1134-residue polypeptide: Sterol regulatory element-binding protein 1 (1134 aa).

The interval Met1–Gly60 is transcriptional activation (acidic). Residues Met1–Arg477 are Cytoplasmic-facing. Positions Asn27–Leu35 match the 9aaTAD motif. The segment at Leu46 to Ser73 is disordered. The segment covering Thr59–Pro69 has biased composition (polar residues). 2 positions are modified to phosphoserine: Ser96 and Ser115. 2 disordered regions span residues Leu130–Ala149 and Ser170–Thr195. The span at Ser170–Gln179 shows a compositional bias: polar residues. Positions Gln227–Cys487 are interaction with LMNA. In terms of domain architecture, bHLH spans Glu317–Leu367. Phosphoserine; by SIK1 is present on residues Ser331 and Ser332. A leucine-zipper region spans residues Leu367 to Lys388. Phosphoserine; by AMPK is present on Ser389. Ser395 bears the Phosphoserine; by SIK1 mark. Residues Val415–His468 are disordered. A compositionally biased stretch (low complexity) spans Asp424–Pro453. Ser448 bears the Phosphoserine mark. A helical membrane pass occupies residues Leu478–Gly498. Residues Trp499–Pro536 are Lumenal-facing. Residues Leu537–Gly557 traverse the membrane as a helical segment. At Glu558–Ser1134 the chain is on the cytoplasmic side. Position 1047 is a phosphoserine (Ser1047).

Belongs to the SREBP family. In terms of assembly, forms a tight complex with SCAP, the SCAP-SREBP complex, in the endoplasmic reticulum membrane and the Golgi apparatus. Interacts with PAQR3; the interaction anchors the SCAP-SREBP complex to the Golgi apparatus in low cholesterol conditions. Efficient DNA binding of the soluble transcription factor fragment requires dimerization with another bHLH protein. Interacts with CEBPA, the interaction produces a transcriptional synergy. Interacts with LMNA. Processed in the Golgi apparatus, releasing the protein from the membrane. At low cholesterol the SCAP-SREBP complex is recruited into COPII vesicles for export from the endoplasmic reticulum. In the Golgi, complex SREBPs are cleaved sequentially by site-1 (MBTPS1, S1P) and site-2 (MBTPS2, S2P) proteases. The first cleavage by site-1 protease occurs within the luminal loop, the second cleavage by site-2 protease occurs within the first transmembrane domain, releasing the transcription factor from the Golgi membrane. In terms of processing, phosphorylated by AMPK, leading to suppress protein processing and nuclear translocation, and repress target gene expression. Phosphorylation at Ser-389 by SIK1 represses activity possibly by inhibiting DNA-binding. Post-translationally, SCAP-free SREBF1 is ubiquitinated by the BCR(ARMC5) complex, leading to its degradation. Ubiquitinated; the nuclear form has a rapid turnover and is rapidly ubiquitinated and degraded by the proteasome in the nucleus. In terms of tissue distribution, predominant isoform expressed in most tissues. Predominates in liver, adrenal gland, brain and adipose tissue. Also found in kidney, thymus, testis, muscle, jejunum, and ileum. As to expression, expressed only in select tissues, such as intestinal epithelial, heart, macrophage and bone marrow dendritic cells. Also found in kidney, thymus, testis, muscle, jejunum, and ileum.

The protein localises to the endoplasmic reticulum membrane. It is found in the golgi apparatus membrane. It localises to the cytoplasmic vesicle. Its subcellular location is the COPII-coated vesicle membrane. The protein resides in the nucleus. With respect to regulation, activation by cleavage is down-regulated upon activation of SIRT3-dependent PRKAA1/AMPK-alpha signaling cascade which leads to inhibition of ATP-consuming lipogenesis to restore cellular energy balance. Precursor of the transcription factor form (Processed sterol regulatory element-binding protein 1), which is embedded in the endoplasmic reticulum membrane. Low sterol concentrations promote processing of this form, releasing the transcription factor form that translocates into the nucleus and activates transcription of genes involved in cholesterol biosynthesis and lipid homeostasis. In terms of biological role, key transcription factor that regulates expression of genes involved in cholesterol biosynthesis and lipid homeostasis. Binds to the sterol regulatory element 1 (SRE-1) (5'-ATCACCCCAC-3'). Has dual sequence specificity binding to both an E-box motif (5'-ATCACGTGA-3') and to SRE-1 (5'-ATCACCCCAC-3'). Regulates the promoters of genes involved in cholesterol biosynthesis and the LDL receptor (LDLR) pathway of sterol regulation. Its function is as follows. Isoform expressed only in select tissues, which has higher transcriptional activity compared to SREBP-1C. Able to stimulate both lipogenic and cholesterogenic gene expression. Has a role in the nutritional regulation of fatty acids and triglycerides in lipogenic organs such as the liver. Required for innate immune response in macrophages by regulating lipid metabolism. Functionally, predominant isoform expressed in most tissues, which has weaker transcriptional activity compared to isoform SREBP-1A. Primarily controls expression of lipogenic gene. Strongly activates global lipid synthesis in rapidly growing cells. This Mus musculus (Mouse) protein is Sterol regulatory element-binding protein 1.